The primary structure comprises 499 residues: MSRYVGAIDQGTTSSRFIVFDKGGNIVSVAQKEHRQIYPKPGWVEHDPMEILSNTNEVIGAALARANLTASDLAAVGITNQRETTLLWDRKTGQPLCNALVWMDTRTDQLVQQFTRDGGQDRFRAKTGLPLATYFAGLKLRWILDNVEGAKAKAEAGDALFGTVDSWLTWNLTGGVNGGHHVTDVTNASRTMLIDLATCAWDDDMLNAFGIPRACLPKIVPSSAVYGEIRTAPLQGTKLAGMLGDQQAALVGQTCFAPGEAKNTYGTGSFLLMNTGTEPVQSKAGLLTTLAYQLGDEKPRYALEGAIAITGALVQWLRDNLKLFDVAPQIEPLARSVEDNGDVYIVPAFSGLYAPYWKDDARGVIAGLTRYATRAHLARAALESTAYQVRDVVEAMQEDSGIRLAALKTDGGMVANELLMQFQADILNAPVVRPKMTETTALGAAYAAGLAVGYWANLEDLRANWGVDKTWEPSMPAETREKYYRSWKKAVQRSFAWVD.

Position 12 (Thr-12) interacts with ADP. Positions 12, 13, and 14 each coordinate ATP. Thr-12 is a sn-glycerol 3-phosphate binding site. Arg-16 serves as a coordination point for ADP. Positions 82, 83, 134, and 245 each coordinate sn-glycerol 3-phosphate. Residues Arg-82, Glu-83, Tyr-134, Asp-245, and Gln-246 each contribute to the glycerol site. ADP contacts are provided by Thr-267 and Gly-311. Positions 267, 311, 315, and 412 each coordinate ATP. Gly-412 and Asn-416 together coordinate ADP.

Belongs to the FGGY kinase family.

It catalyses the reaction glycerol + ATP = sn-glycerol 3-phosphate + ADP + H(+). The protein operates within polyol metabolism; glycerol degradation via glycerol kinase pathway; sn-glycerol 3-phosphate from glycerol: step 1/1. Its activity is regulated as follows. Inhibited by fructose 1,6-bisphosphate (FBP). In terms of biological role, key enzyme in the regulation of glycerol uptake and metabolism. Catalyzes the phosphorylation of glycerol to yield sn-glycerol 3-phosphate. This chain is Glycerol kinase, found in Acidiphilium cryptum (strain JF-5).